We begin with the raw amino-acid sequence, 144 residues long: Signal recognition particle 19 kDa protein (144 aa).

The tract at residues 117–144 (TRTQKTGGGDQSLQQGEGSKKGKGKKKK) is disordered.

This sequence belongs to the SRP19 family. As to quaternary structure, component of a signal recognition particle complex that consists of a 7SL RNA molecule of 300 nucleotides and six protein subunits: SRP72, SRP68, SRP54, SRP19, SRP14 and SRP9. Interacts with IPO5, IPO7, IPO8, KPNB1 and TNPO1. Interactions with IPO8 and TNPO1 may be involved in SRP19 import into the nucleus.

Its subcellular location is the cytoplasm. The protein localises to the nucleus. It is found in the nucleolus. It localises to the nucleoplasm. In terms of biological role, component of the signal recognition particle (SRP) complex, a ribonucleoprotein complex that mediates the cotranslational targeting of secretory and membrane proteins to the endoplasmic reticulum (ER). Binds directly to 7SL RNA. Mediates binding of SRP54 to the SRP complex. The protein is Signal recognition particle 19 kDa protein of Canis lupus familiaris (Dog).